Here is a 311-residue protein sequence, read N- to C-terminus: Methionyl-tRNA formyltransferase (311 aa).

109-112 (SLLP) lines the (6S)-5,6,7,8-tetrahydrofolate pocket.

The protein belongs to the Fmt family.

It catalyses the reaction L-methionyl-tRNA(fMet) + (6R)-10-formyltetrahydrofolate = N-formyl-L-methionyl-tRNA(fMet) + (6S)-5,6,7,8-tetrahydrofolate + H(+). In terms of biological role, attaches a formyl group to the free amino group of methionyl-tRNA(fMet). The formyl group appears to play a dual role in the initiator identity of N-formylmethionyl-tRNA by promoting its recognition by IF2 and preventing the misappropriation of this tRNA by the elongation apparatus. The protein is Methionyl-tRNA formyltransferase of Acetivibrio thermocellus (strain ATCC 27405 / DSM 1237 / JCM 9322 / NBRC 103400 / NCIMB 10682 / NRRL B-4536 / VPI 7372) (Clostridium thermocellum).